The chain runs to 133 residues: Profilin (133 aa).

It belongs to the profilin family. Occurs in many kinds of cells as a complex with monomeric actin in a 1:1 ratio.

The protein localises to the cytoplasm. It is found in the cytoskeleton. In terms of biological role, binds to actin and affects the structure of the cytoskeleton. At high concentrations, profilin prevents the polymerization of actin, whereas it enhances it at low concentrations. By binding to PIP2, it inhibits the formation of IP3 and DG. In Mercurialis annua (Annual mercury), this protein is Profilin.